The following is a 309-amino-acid chain: Probable manganese-dependent inorganic pyrophosphatase (309 aa).

Histidine 9, aspartate 13, aspartate 15, aspartate 75, histidine 97, and aspartate 149 together coordinate Mn(2+).

It belongs to the PPase class C family. Requires Mn(2+) as cofactor.

Its subcellular location is the cytoplasm. The enzyme catalyses diphosphate + H2O = 2 phosphate + H(+). The polypeptide is Probable manganese-dependent inorganic pyrophosphatase (Bacillus cereus (strain ZK / E33L)).